We begin with the raw amino-acid sequence, 196 residues long: Putative NADH dehydrogenase/NAD(P)H nitroreductase SGR_2476 (196 aa).

It belongs to the nitroreductase family. HadB/RutE subfamily. FMN serves as cofactor.

The protein is Putative NADH dehydrogenase/NAD(P)H nitroreductase SGR_2476 of Streptomyces griseus subsp. griseus (strain JCM 4626 / CBS 651.72 / NBRC 13350 / KCC S-0626 / ISP 5235).